The following is a 291-amino-acid chain: Formamidopyrimidine-DNA glycosylase (291 aa).

Pro2 acts as the Schiff-base intermediate with DNA in catalysis. Glu3 functions as the Proton donor in the catalytic mechanism. Residue Lys58 is the Proton donor; for beta-elimination activity of the active site. Residues His100, Arg123, and Lys166 each coordinate DNA. The FPG-type zinc-finger motif lies at 257–291 (SVYGREGKECLQCGTPIIRILQSGRSSFYCSQCQK). Arg281 (proton donor; for delta-elimination activity) is an active-site residue.

It belongs to the FPG family. Monomer. Zn(2+) is required as a cofactor.

The enzyme catalyses Hydrolysis of DNA containing ring-opened 7-methylguanine residues, releasing 2,6-diamino-4-hydroxy-5-(N-methyl)formamidopyrimidine.. It carries out the reaction 2'-deoxyribonucleotide-(2'-deoxyribose 5'-phosphate)-2'-deoxyribonucleotide-DNA = a 3'-end 2'-deoxyribonucleotide-(2,3-dehydro-2,3-deoxyribose 5'-phosphate)-DNA + a 5'-end 5'-phospho-2'-deoxyribonucleoside-DNA + H(+). Involved in base excision repair of DNA damaged by oxidation or by mutagenic agents. Acts as a DNA glycosylase that recognizes and removes damaged bases. Has a preference for oxidized purines, such as 7,8-dihydro-8-oxoguanine (8-oxoG). Has AP (apurinic/apyrimidinic) lyase activity and introduces nicks in the DNA strand. Cleaves the DNA backbone by beta-delta elimination to generate a single-strand break at the site of the removed base with both 3'- and 5'-phosphates. The protein is Formamidopyrimidine-DNA glycosylase of Bartonella tribocorum (strain CIP 105476 / IBS 506).